The primary structure comprises 128 residues: Large ribosomal subunit protein bL12 (128 aa).

The protein belongs to the bacterial ribosomal protein bL12 family. As to quaternary structure, homodimer. Part of the ribosomal stalk of the 50S ribosomal subunit. Forms a multimeric L10(L12)X complex, where L10 forms an elongated spine to which 2 to 4 L12 dimers bind in a sequential fashion. Binds GTP-bound translation factors.

Forms part of the ribosomal stalk which helps the ribosome interact with GTP-bound translation factors. Is thus essential for accurate translation. This Brachyspira hyodysenteriae (strain ATCC 49526 / WA1) protein is Large ribosomal subunit protein bL12.